Reading from the N-terminus, the 388-residue chain is Acetate kinase (388 aa).

A Mg(2+)-binding site is contributed by asparagine 14. Position 21 (lysine 21) interacts with ATP. Arginine 80 contributes to the substrate binding site. The active-site Proton donor/acceptor is the aspartate 137. Residues 197-201, 271-273, and 319-323 contribute to the ATP site; these read HLGNG, DFR, and GIGEH. Glutamate 373 contacts Mg(2+).

It belongs to the acetokinase family. Homodimer. It depends on Mg(2+) as a cofactor. Mn(2+) is required as a cofactor.

The protein resides in the cytoplasm. The enzyme catalyses acetate + ATP = acetyl phosphate + ADP. Its pathway is metabolic intermediate biosynthesis; acetyl-CoA biosynthesis; acetyl-CoA from acetate: step 1/2. Catalyzes the formation of acetyl phosphate from acetate and ATP. Can also catalyze the reverse reaction. In Mycobacterium marinum (strain ATCC BAA-535 / M), this protein is Acetate kinase.